We begin with the raw amino-acid sequence, 344 residues long: Glyceraldehyde-3-phosphate dehydrogenase (344 aa).

NAD(+) contacts are provided by residues 11 to 12 and G110; that span reads TI. 139–141 contacts D-glyceraldehyde 3-phosphate; it reads SCN. The active-site Nucleophile is C140. NAD(+) is bound at residue R169. 195-196 contacts D-glyceraldehyde 3-phosphate; that stretch reads HG. Q302 provides a ligand contact to NAD(+).

It belongs to the glyceraldehyde-3-phosphate dehydrogenase family. In terms of assembly, homotetramer.

The protein localises to the cytoplasm. The enzyme catalyses D-glyceraldehyde 3-phosphate + phosphate + NADP(+) = (2R)-3-phospho-glyceroyl phosphate + NADPH + H(+). It catalyses the reaction D-glyceraldehyde 3-phosphate + phosphate + NAD(+) = (2R)-3-phospho-glyceroyl phosphate + NADH + H(+). It functions in the pathway carbohydrate degradation; glycolysis; pyruvate from D-glyceraldehyde 3-phosphate: step 1/5. This chain is Glyceraldehyde-3-phosphate dehydrogenase, found in Pyrobaculum islandicum (strain DSM 4184 / JCM 9189 / GEO3).